Consider the following 261-residue polypeptide: tRNA pseudouridine synthase A (261 aa).

The active-site Nucleophile is aspartate 51. A substrate-binding site is contributed by tyrosine 109.

Belongs to the tRNA pseudouridine synthase TruA family. In terms of assembly, homodimer.

It catalyses the reaction uridine(38/39/40) in tRNA = pseudouridine(38/39/40) in tRNA. Its function is as follows. Formation of pseudouridine at positions 38, 39 and 40 in the anticodon stem and loop of transfer RNAs. This Shewanella sp. (strain MR-4) protein is tRNA pseudouridine synthase A.